A 71-amino-acid polypeptide reads, in one-letter code: Small ribosomal subunit protein bS18 (71 aa).

It belongs to the bacterial ribosomal protein bS18 family. In terms of assembly, part of the 30S ribosomal subunit. Forms a tight heterodimer with protein bS6.

Binds as a heterodimer with protein bS6 to the central domain of the 16S rRNA, where it helps stabilize the platform of the 30S subunit. This is Small ribosomal subunit protein bS18 from Synechocystis sp. (strain ATCC 27184 / PCC 6803 / Kazusa).